The chain runs to 264 residues: Thymidylate synthase (264 aa).

DUMP is bound at residue arginine 21. Histidine 51 provides a ligand contact to (6R)-5,10-methylene-5,6,7,8-tetrahydrofolate. 126 to 127 (RR) contacts dUMP. Cysteine 146 acts as the Nucleophile in catalysis. Residues 166–169 (RSAD), asparagine 177, and 207–209 (HLY) each bind dUMP. Aspartate 169 contributes to the (6R)-5,10-methylene-5,6,7,8-tetrahydrofolate binding site. Position 263 (alanine 263) interacts with (6R)-5,10-methylene-5,6,7,8-tetrahydrofolate.

The protein belongs to the thymidylate synthase family. Bacterial-type ThyA subfamily. In terms of assembly, homodimer.

The protein localises to the cytoplasm. It carries out the reaction dUMP + (6R)-5,10-methylene-5,6,7,8-tetrahydrofolate = 7,8-dihydrofolate + dTMP. It participates in pyrimidine metabolism; dTTP biosynthesis. Its function is as follows. Catalyzes the reductive methylation of 2'-deoxyuridine-5'-monophosphate (dUMP) to 2'-deoxythymidine-5'-monophosphate (dTMP) while utilizing 5,10-methylenetetrahydrofolate (mTHF) as the methyl donor and reductant in the reaction, yielding dihydrofolate (DHF) as a by-product. This enzymatic reaction provides an intracellular de novo source of dTMP, an essential precursor for DNA biosynthesis. The polypeptide is Thymidylate synthase (Cupriavidus necator (strain ATCC 17699 / DSM 428 / KCTC 22496 / NCIMB 10442 / H16 / Stanier 337) (Ralstonia eutropha)).